Reading from the N-terminus, the 319-residue chain is Protoheme IX farnesyltransferase (319 aa).

A run of 9 helical transmembrane segments spans residues Val-34 to Asn-54, Pro-55 to Leu-75, Ile-95 to Phe-115, Ile-119 to Tyr-139, Ile-155 to Gly-175, Val-182 to Phe-202, Val-221 to Val-241, Phe-244 to Val-264, and Ile-291 to Met-311.

This sequence belongs to the UbiA prenyltransferase family. Protoheme IX farnesyltransferase subfamily.

It is found in the cell inner membrane. The catalysed reaction is heme b + (2E,6E)-farnesyl diphosphate + H2O = Fe(II)-heme o + diphosphate. It functions in the pathway porphyrin-containing compound metabolism; heme O biosynthesis; heme O from protoheme: step 1/1. Its function is as follows. Converts heme B (protoheme IX) to heme O by substitution of the vinyl group on carbon 2 of heme B porphyrin ring with a hydroxyethyl farnesyl side group. This chain is Protoheme IX farnesyltransferase, found in Rhizobium rhizogenes (strain K84 / ATCC BAA-868) (Agrobacterium radiobacter).